Here is a 172-residue protein sequence, read N- to C-terminus: Outer-membrane lipoprotein carrier protein (172 aa).

An N-terminal signal peptide occupies residues 1–16; it reads MRIALLWVAFGALALA.

It belongs to the LolA family. Monomer.

Its subcellular location is the periplasm. Its function is as follows. Participates in the translocation of lipoproteins from the inner membrane to the outer membrane. Only forms a complex with a lipoprotein if the residue after the N-terminal Cys is not an aspartate (The Asp acts as a targeting signal to indicate that the lipoprotein should stay in the inner membrane). This chain is Outer-membrane lipoprotein carrier protein, found in Wolinella succinogenes (strain ATCC 29543 / DSM 1740 / CCUG 13145 / JCM 31913 / LMG 7466 / NCTC 11488 / FDC 602W) (Vibrio succinogenes).